The sequence spans 170 residues: Adenine phosphoribosyltransferase (170 aa).

It belongs to the purine/pyrimidine phosphoribosyltransferase family. As to quaternary structure, homodimer.

It is found in the cytoplasm. The catalysed reaction is AMP + diphosphate = 5-phospho-alpha-D-ribose 1-diphosphate + adenine. It participates in purine metabolism; AMP biosynthesis via salvage pathway; AMP from adenine: step 1/1. In terms of biological role, catalyzes a salvage reaction resulting in the formation of AMP, that is energically less costly than de novo synthesis. The chain is Adenine phosphoribosyltransferase from Thermotoga sp. (strain RQ2).